We begin with the raw amino-acid sequence, 753 residues long: 5-methyltetrahydropteroyltriglutamate--homocysteine methyltransferase (753 aa).

Residues Arg17–Lys20 and Lys117 each bind 5-methyltetrahydropteroyltri-L-glutamate. L-homocysteine contacts are provided by residues Ile431–Ser433 and Glu484. L-methionine contacts are provided by residues Ile431–Ser433 and Glu484. 5-methyltetrahydropteroyltri-L-glutamate-binding positions include Arg515–Cys516 and Trp561. Residue Asp599 coordinates L-homocysteine. Residue Asp599 participates in L-methionine binding. Glu605 lines the 5-methyltetrahydropteroyltri-L-glutamate pocket. Positions 641, 643, and 665 each coordinate Zn(2+). The active-site Proton donor is His694. Cys726 contributes to the Zn(2+) binding site.

The protein belongs to the vitamin-B12 independent methionine synthase family. It depends on Zn(2+) as a cofactor.

The enzyme catalyses 5-methyltetrahydropteroyltri-L-glutamate + L-homocysteine = tetrahydropteroyltri-L-glutamate + L-methionine. Its pathway is amino-acid biosynthesis; L-methionine biosynthesis via de novo pathway; L-methionine from L-homocysteine (MetE route): step 1/1. Its function is as follows. Catalyzes the transfer of a methyl group from 5-methyltetrahydrofolate to homocysteine resulting in methionine formation. This Escherichia coli O1:K1 / APEC protein is 5-methyltetrahydropteroyltriglutamate--homocysteine methyltransferase.